Reading from the N-terminus, the 442-residue chain is tRNA-2-methylthio-N(6)-dimethylallyladenosine synthase (442 aa).

The 118-residue stretch at 5 to 122 (KKVFIKTLGC…LPEMIKQKQK (118 aa)) folds into the MTTase N-terminal domain. [4Fe-4S] cluster is bound by residues Cys-14, Cys-51, Cys-85, Cys-159, Cys-163, and Cys-166. Positions 145–378 (KAEGAKAYVS…DLLNSNAQII (234 aa)) constitute a Radical SAM core domain. Residues 380–442 (RQMVGTNQRI…LPNSLRGELI (63 aa)) form the TRAM domain.

This sequence belongs to the methylthiotransferase family. MiaB subfamily. As to quaternary structure, monomer. It depends on [4Fe-4S] cluster as a cofactor.

The protein localises to the cytoplasm. It carries out the reaction N(6)-dimethylallyladenosine(37) in tRNA + (sulfur carrier)-SH + AH2 + 2 S-adenosyl-L-methionine = 2-methylsulfanyl-N(6)-dimethylallyladenosine(37) in tRNA + (sulfur carrier)-H + 5'-deoxyadenosine + L-methionine + A + S-adenosyl-L-homocysteine + 2 H(+). Catalyzes the methylthiolation of N6-(dimethylallyl)adenosine (i(6)A), leading to the formation of 2-methylthio-N6-(dimethylallyl)adenosine (ms(2)i(6)A) at position 37 in tRNAs that read codons beginning with uridine. The sequence is that of tRNA-2-methylthio-N(6)-dimethylallyladenosine synthase from Francisella tularensis subsp. holarctica (strain LVS).